The chain runs to 121 residues: Holo-[acyl-carrier-protein] synthase (121 aa).

Mg(2+) is bound by residues Asp-6 and Glu-55.

Belongs to the P-Pant transferase superfamily. AcpS family. The cofactor is Mg(2+).

It is found in the cytoplasm. The enzyme catalyses apo-[ACP] + CoA = holo-[ACP] + adenosine 3',5'-bisphosphate + H(+). Its function is as follows. Transfers the 4'-phosphopantetheine moiety from coenzyme A to a Ser of acyl-carrier-protein. In Chloroherpeton thalassium (strain ATCC 35110 / GB-78), this protein is Holo-[acyl-carrier-protein] synthase.